The chain runs to 458 residues: Argininosuccinate lyase (458 aa).

This sequence belongs to the lyase 1 family. Argininosuccinate lyase subfamily.

It localises to the cytoplasm. It catalyses the reaction 2-(N(omega)-L-arginino)succinate = fumarate + L-arginine. Its pathway is amino-acid biosynthesis; L-arginine biosynthesis; L-arginine from L-ornithine and carbamoyl phosphate: step 3/3. The polypeptide is Argininosuccinate lyase (Buchnera aphidicola subsp. Baizongia pistaciae (strain Bp)).